A 197-amino-acid chain; its full sequence is ATP-dependent Clp protease proteolytic subunit (197 aa).

Serine 102 serves as the catalytic Nucleophile. The active site involves histidine 127.

Belongs to the peptidase S14 family. As to quaternary structure, fourteen ClpP subunits assemble into 2 heptameric rings which stack back to back to give a disk-like structure with a central cavity, resembling the structure of eukaryotic proteasomes.

The protein localises to the cytoplasm. The catalysed reaction is Hydrolysis of proteins to small peptides in the presence of ATP and magnesium. alpha-casein is the usual test substrate. In the absence of ATP, only oligopeptides shorter than five residues are hydrolyzed (such as succinyl-Leu-Tyr-|-NHMec, and Leu-Tyr-Leu-|-Tyr-Trp, in which cleavage of the -Tyr-|-Leu- and -Tyr-|-Trp bonds also occurs).. In terms of biological role, cleaves peptides in various proteins in a process that requires ATP hydrolysis. Has a chymotrypsin-like activity. Plays a major role in the degradation of misfolded proteins. The sequence is that of ATP-dependent Clp protease proteolytic subunit from Buchnera aphidicola subsp. Schizaphis graminum (strain Sg).